We begin with the raw amino-acid sequence, 880 residues long: Leucine--tRNA ligase (880 aa).

Residues 46–56 carry the 'HIGH' region motif; it reads PYPSGALHMGH. The 'KMSKS' region signature appears at 638–642; the sequence is KMSKS. ATP is bound at residue Lys-641.

The protein belongs to the class-I aminoacyl-tRNA synthetase family.

It localises to the cytoplasm. The enzyme catalyses tRNA(Leu) + L-leucine + ATP = L-leucyl-tRNA(Leu) + AMP + diphosphate. This Xanthomonas euvesicatoria pv. vesicatoria (strain 85-10) (Xanthomonas campestris pv. vesicatoria) protein is Leucine--tRNA ligase.